The following is a 232-amino-acid chain: UPF0502 protein mma_2112 (232 aa).

The protein belongs to the UPF0502 family.

The polypeptide is UPF0502 protein mma_2112 (Janthinobacterium sp. (strain Marseille) (Minibacterium massiliensis)).